The primary structure comprises 1003 residues: SWI/SNF-related matrix-associated actin-dependent regulator of chromatin subfamily A containing DEAD/H box 1 (1003 aa).

3 disordered regions span residues 15-130, 172-235, and 274-351; these read KKID…SKYK, GSSR…HFPD, and AKKE…EDYS. Basic and acidic residues-rich tracts occupy residues 172–188, 221–235, and 274–294; these read GSSR…DSSP, KQEA…HFPD, and AKKE…DNKS. The region spanning 221 to 264 is the CUE domain; the sequence is KQEASVKKLQRHFPDLDKEELREVLQEHDWSFHEALEALKLFAE. The segment covering 295 to 311 has biased composition (low complexity); it reads SAKAKANQNSNKAMAQN. The span at 321–333 shows a compositional bias: basic and acidic residues; it reads KYSENAKRDTRDL. The region spanning 486–654 is the Helicase ATP-binding domain; it reads ALLHKHKVNM…MSLLNFVMPH (169 aa). 499–506 serves as a coordination point for ATP; it reads DEMGLGKT. The short motif at 605-608 is the DEGH box element; the sequence is DEGH. The 163-residue stretch at 835–997 folds into the Helicase C-terminal domain; sequence ILEKLLSDIK…TIPLDMATLL (163 aa).

This sequence belongs to the SNF2/RAD54 helicase family.

The protein resides in the nucleus. It is found in the chromosome. The catalysed reaction is ATP + H2O = ADP + phosphate + H(+). DNA helicase that possesses intrinsic ATP-dependent nucleosome-remodeling activity and is both required for DNA repair and heterochromatin organization. Promotes DNA end resection of double-strand breaks (DSBs) following DNA damage: probably acts by weakening histone DNA interactions in nucleosomes flanking DSBs. Required for the restoration of heterochromatin organization after replication. The sequence is that of SWI/SNF-related matrix-associated actin-dependent regulator of chromatin subfamily A containing DEAD/H box 1 (smarcad1) from Xenopus tropicalis (Western clawed frog).